The sequence spans 474 residues: tRNA-2-methylthio-N(6)-dimethylallyladenosine synthase (474 aa).

In terms of domain architecture, MTTase N-terminal spans 3–120 (KKLHIKTWGC…LPEMINSVRG (118 aa)). The [4Fe-4S] cluster site is built by Cys12, Cys49, Cys83, Cys157, Cys161, and Cys164. In terms of domain architecture, Radical SAM core spans 143-375 (RAEGPTAFVS…QERINQQAMA (233 aa)). Residues 378 to 441 (RRMLGTTQRI…PNSLRGKVVR (64 aa)) form the TRAM domain.

Belongs to the methylthiotransferase family. MiaB subfamily. As to quaternary structure, monomer. Requires [4Fe-4S] cluster as cofactor.

Its subcellular location is the cytoplasm. The catalysed reaction is N(6)-dimethylallyladenosine(37) in tRNA + (sulfur carrier)-SH + AH2 + 2 S-adenosyl-L-methionine = 2-methylsulfanyl-N(6)-dimethylallyladenosine(37) in tRNA + (sulfur carrier)-H + 5'-deoxyadenosine + L-methionine + A + S-adenosyl-L-homocysteine + 2 H(+). Catalyzes the methylthiolation of N6-(dimethylallyl)adenosine (i(6)A), leading to the formation of 2-methylthio-N6-(dimethylallyl)adenosine (ms(2)i(6)A) at position 37 in tRNAs that read codons beginning with uridine. This chain is tRNA-2-methylthio-N(6)-dimethylallyladenosine synthase, found in Shigella boydii serotype 4 (strain Sb227).